Here is a 147-residue protein sequence, read N- to C-terminus: Large ribosomal subunit protein uL15 (147 aa).

Residues 1-42 (MTIKVHHLRPAPGAKTTKTRVGRGEGSKGKTAGRGTKGSKAR) are disordered.

This sequence belongs to the universal ribosomal protein uL15 family. Part of the 50S ribosomal subunit.

Binds to the 23S rRNA. The chain is Large ribosomal subunit protein uL15 from Salinispora tropica (strain ATCC BAA-916 / DSM 44818 / JCM 13857 / NBRC 105044 / CNB-440).